A 354-amino-acid polypeptide reads, in one-letter code: Protein RecA (354 aa).

Residue 67–74 coordinates ATP; that stretch reads GPESSGKT.

The protein belongs to the RecA family.

The protein localises to the cytoplasm. Its function is as follows. Can catalyze the hydrolysis of ATP in the presence of single-stranded DNA, the ATP-dependent uptake of single-stranded DNA by duplex DNA, and the ATP-dependent hybridization of homologous single-stranded DNAs. It interacts with LexA causing its activation and leading to its autocatalytic cleavage. In Haemophilus influenzae (strain 86-028NP), this protein is Protein RecA.